The following is a 201-amino-acid chain: dCTP deaminase, dUMP-forming (201 aa).

DCTP is bound by residues 101–106 (KSSLGR), D119, 127–129 (TLE), Q148, Y162, and Q174. E129 functions as the Proton donor/acceptor in the catalytic mechanism.

The protein belongs to the dCTP deaminase family. As to quaternary structure, homotrimer.

It catalyses the reaction dCTP + 2 H2O = dUMP + NH4(+) + diphosphate. Its pathway is pyrimidine metabolism; dUMP biosynthesis; dUMP from dCTP: step 1/1. In terms of biological role, bifunctional enzyme that catalyzes both the deamination of dCTP to dUTP and the hydrolysis of dUTP to dUMP without releasing the toxic dUTP intermediate. This Clavibacter michiganensis subsp. michiganensis (strain NCPPB 382) protein is dCTP deaminase, dUMP-forming.